Reading from the N-terminus, the 215-residue chain is MVLRSEILTKKSELPTPDQALPGRESAMPVPEAHFVNGRPLTAPFPAGLQQVLFGMGCFWGAERRLWQQPGVWVTAVGYAGGYTPNPTYDEVCSGLTGHSEVVLVVYNPQETSFEQLLKVFWEAHDPTQGMRQGGDIGTQYRSVIYTFDAAQKAAAMASRENFQAELAKAGYDRITTEIADVPPFYYAEAYHQQYLAKNPNGYCGLGGTGVCLPA.

The active site involves cysteine 58.

It belongs to the MsrA Met sulfoxide reductase family.

It carries out the reaction L-methionyl-[protein] + [thioredoxin]-disulfide + H2O = L-methionyl-(S)-S-oxide-[protein] + [thioredoxin]-dithiol. The enzyme catalyses [thioredoxin]-disulfide + L-methionine + H2O = L-methionine (S)-S-oxide + [thioredoxin]-dithiol. Its function is as follows. Has an important function as a repair enzyme for proteins that have been inactivated by oxidation. Catalyzes the reversible oxidation-reduction of methionine sulfoxide in proteins to methionine. The sequence is that of Peptide methionine sulfoxide reductase MsrA from Pseudomonas aeruginosa (strain UCBPP-PA14).